Consider the following 78-residue polypeptide: Acyl carrier protein (78 aa).

The 76-residue stretch at 2–77 (SSIEERVKKI…QATSYVEANL (76 aa)) folds into the Carrier domain. Ser-37 bears the O-(pantetheine 4'-phosphoryl)serine mark.

It belongs to the acyl carrier protein (ACP) family. 4'-phosphopantetheine is transferred from CoA to a specific serine of apo-ACP by AcpS. This modification is essential for activity because fatty acids are bound in thioester linkage to the sulfhydryl of the prosthetic group.

It is found in the cytoplasm. The protein operates within lipid metabolism; fatty acid biosynthesis. In terms of biological role, carrier of the growing fatty acid chain in fatty acid biosynthesis. The sequence is that of Acyl carrier protein from Hydrogenovibrio crunogenus (strain DSM 25203 / XCL-2) (Thiomicrospira crunogena).